We begin with the raw amino-acid sequence, 597 residues long: Large ribosomal subunit assembly factor BipA (597 aa).

The 196-residue stretch at 3–198 folds into the tr-type G domain; it reads LPIRNVAIIA…AILHHVPPPA (196 aa). GTP contacts are provided by residues 15-20 and 128-131; these read DHGKTT and NKID.

This sequence belongs to the TRAFAC class translation factor GTPase superfamily. Classic translation factor GTPase family. BipA subfamily. Monomer.

It is found in the cytoplasm. It carries out the reaction GTP + H2O = GDP + phosphate + H(+). In terms of biological role, a 50S ribosomal subunit assembly protein with GTPase activity, required for 50S subunit assembly at low temperatures, may also play a role in translation. Binds GTP and analogs. Binds the 70S ribosome between the 30S and 50S subunits, in a similar position as ribosome-bound EF-G; it contacts a number of ribosomal proteins, both rRNAs and the A-site tRNA. The sequence is that of Large ribosomal subunit assembly factor BipA from Synechocystis sp. (strain ATCC 27184 / PCC 6803 / Kazusa).